Here is a 114-residue protein sequence, read N- to C-terminus: Small ribosomal subunit protein bS6 (114 aa).

Belongs to the bacterial ribosomal protein bS6 family.

Its function is as follows. Binds together with bS18 to 16S ribosomal RNA. This chain is Small ribosomal subunit protein bS6, found in Protochlamydia amoebophila (strain UWE25).